The following is a 1004-amino-acid chain: Glutamate [NMDA] receptor subunit 1 (1004 aa).

Residues 1–39 form the signal peptide; it reads MAGTDSPAAARFVYRCLLFAPAIVVGLLLPLTLPPIAAA. Residues 40-585 are Extracellular-facing; that stretch reads QRHTASDNPS…TLVSFLQPFS (546 aa). N-linked (GlcNAc...) asparagine glycans are attached at residues asparagine 270, asparagine 326, asparagine 357, asparagine 409, asparagine 466, asparagine 493, and asparagine 513. Residues 542-544 and arginine 549 each bind glycine; that span reads PLT. Residues 586–606 form a helical membrane-spanning segment; sequence NTLWILVMVSVHVVALVLYLL. At 607-663 the chain is on the cytoplasmic side; sequence DRFSPFGRFKLSHSDSNEEKALNLSSAVWFAWGVLLNSGIGEGTPRSFSARVLGMVW. Residues 664-684 form a helical membrane-spanning segment; it reads AGFAMIIVASYTANLAAFLVL. Topologically, residues 685–843 are extracellular; that stretch reads ERPKTKLSGI…KTPNTLGLKN (159 aa). Asparagine 705 carries N-linked (GlcNAc...) asparagine glycosylation. Serine 715 and aspartate 759 together coordinate glycine. Residues 844 to 864 traverse the membrane as a helical segment; that stretch reads MAGVFILVGVGIAGGVGLIII. Topologically, residues 865–1004 are cytoplasmic; sequence EVIYKKHQVK…YTSDVSHLVV (140 aa). The tract at residues 980 to 1004 is disordered; it reads TRPQQNILPPRYSPGYTSDVSHLVV. Residues 994–1004 show a composition bias toward polar residues; it reads GYTSDVSHLVV.

The protein belongs to the glutamate-gated ion channel (TC 1.A.10.1) family. In terms of assembly, forms a heteromeric NMDA channel with Nmdar2.

The protein localises to the cell membrane. It localises to the postsynaptic cell membrane. The protein resides in the postsynaptic density. In terms of biological role, NMDA receptor subtype of glutamate-gated ion channels with high calcium permeability and voltage-dependent sensitivity to magnesium. Mediated by glycine. This protein plays a key role in synaptic plasticity, synaptogenesis, excitotoxicity, memory acquisition and learning. It mediates neuronal functions in glutamate neurotransmission. Is involved in the cell surface targeting of NMDA receptors. Plays a role in associative learning and in long-term memory consolidation. In Drosophila persimilis (Fruit fly), this protein is Glutamate [NMDA] receptor subunit 1.